A 231-amino-acid polypeptide reads, in one-letter code: MINSRQTLDLKLFAASPGEPVDWRRSDQPVPYPGAVDAMERRAAAIASSEAAEQVWLLEHPPLYTCGTSGREADLVKARFPLFSTGRGGQITYHGPGQRIAYVMLDLKRRRPDVREFIACLEEWIIRTLDAFGVKGERREDRVGVWVARPDKGPGHEDKIAAIGVRLRRWVSFHGVSLNVDPDLSHFADIVPCGVSDPRYGVTSLADLGLRVRLTDIDQALKRTFSEVFGS.

Residues 49–231 (SEAAEQVWLL…KRTFSEVFGS (183 aa)) form the BPL/LPL catalytic domain. Residues 87 to 94 (RGGQITYH), 162 to 164 (AIG), and 175 to 177 (GVS) each bind substrate. Cys-193 acts as the Acyl-thioester intermediate in catalysis.

This sequence belongs to the LipB family.

Its subcellular location is the cytoplasm. The enzyme catalyses octanoyl-[ACP] + L-lysyl-[protein] = N(6)-octanoyl-L-lysyl-[protein] + holo-[ACP] + H(+). It participates in protein modification; protein lipoylation via endogenous pathway; protein N(6)-(lipoyl)lysine from octanoyl-[acyl-carrier-protein]: step 1/2. Its function is as follows. Catalyzes the transfer of endogenously produced octanoic acid from octanoyl-acyl-carrier-protein onto the lipoyl domains of lipoate-dependent enzymes. Lipoyl-ACP can also act as a substrate although octanoyl-ACP is likely to be the physiological substrate. This Nitrobacter winogradskyi (strain ATCC 25391 / DSM 10237 / CIP 104748 / NCIMB 11846 / Nb-255) protein is Octanoyltransferase.